Reading from the N-terminus, the 354-residue chain is MDFQGSVPTYSYDIDYGMSAPCQKINVKQIAAQLLPPLYSLVFIFGFVGNMMVFLILISCKKLKSVTDIYLLNLAISDLLFLLTLPFWAHYAANEWVFGNIMCKVFTGLYHIGYFGGIFFIILLTIDRYLAIVHAVFALKVRTVNFGVITSVVTWAVAVFASLPEIIFTRSQKEGFHYTCSPHFPHTQYHFWKSFQTLKMVILSLILPLLVMVICYSGILHTLFRCRNEKKRHRAVRLIFAIMIVYFLFWTPYNIVLLLTTFQEFFGLNNCSSSNRLDQAMQATETLGMTHCCLNPVIYAFVGEKFRSYLSVFFRKHMVKRFCKRCSIFQQDNPDRASSVYTRSTGEHEVSTGL.

The Extracellular segment spans residues 1–32; it reads MDFQGSVPTYSYDIDYGMSAPCQKINVKQIAA. Ser-6 is a glycosylation site (O-linked (GalNAc...) serine). Tyr-10, Tyr-12, and Tyr-16 each carry sulfotyrosine. Intrachain disulfides connect Cys-22/Cys-271 and Cys-103/Cys-180. The helical transmembrane segment at 33–60 threads the bilayer; sequence QLLPPLYSLVFIFGFVGNMMVFLILISC. Over 61–70 the chain is Cytoplasmic; it reads KKLKSVTDIY. A helical membrane pass occupies residues 71–91; it reads LLNLAISDLLFLLTLPFWAHY. The Extracellular portion of the chain corresponds to 92–104; it reads AANEWVFGNIMCK. Residues 105-126 traverse the membrane as a helical segment; the sequence is VFTGLYHIGYFGGIFFIILLTI. The Cytoplasmic portion of the chain corresponds to 127-143; that stretch reads DRYLAIVHAVFALKVRT. A helical membrane pass occupies residues 144–168; that stretch reads VNFGVITSVVTWAVAVFASLPEIIF. Residues 169–200 are Extracellular-facing; it reads TRSQKEGFHYTCSPHFPHTQYHFWKSFQTLKM. A helical transmembrane segment spans residues 201-220; it reads VILSLILPLLVMVICYSGIL. Residues 221 to 237 are Cytoplasmic-facing; the sequence is HTLFRCRNEKKRHRAVR. Residues 238–262 traverse the membrane as a helical segment; the sequence is LIFAIMIVYFLFWTPYNIVLLLTTF. Residues 263 to 279 are Extracellular-facing; the sequence is QEFFGLNNCSSSNRLDQ. A helical transmembrane segment spans residues 280-303; sequence AMQATETLGMTHCCLNPVIYAFVG. Over 304–354 the chain is Cytoplasmic; that stretch reads EKFRSYLSVFFRKHMVKRFCKRCSIFQQDNPDRASSVYTRSTGEHEVSTGL. 2 S-palmitoyl cysteine lipidation sites follow: Cys-323 and Cys-326. Residues Ser-338, Ser-339, Ser-344, and Ser-351 each carry the phosphoserine; by BARK1 modification.

The protein belongs to the G-protein coupled receptor 1 family. In terms of assembly, interacts with PRAF2. Efficient ligand binding to CCL3/MIP-1alpha and CCL4/MIP-1beta requires sulfation, O-glycosylation and sialic acid modifications. Glycosylation on Ser-6 is required for efficient binding of CCL4. Interacts with GRK2. Interacts with ARRB1 and ARRB2. Interacts with CNIH4. Interacts with S100A4; this interaction stimulates T-lymphocyte chemotaxis. Sulfated on at least 2 of the N-terminal tyrosines. Sulfation is required for efficient binding of the chemokines, CCL3 and CCL4. In terms of processing, O-glycosylated, but not N-glycosylated. Ser-6 appears to be the major site. Also sialylated glycans present which contribute to chemokine binding. Post-translationally, palmitoylation in the C-terminal is important for cell surface expression. Phosphorylation on serine residues in the C-terminal is stimulated by binding CC chemokines especially by APO-RANTES.

Its subcellular location is the cell membrane. In terms of biological role, receptor for a number of inflammatory CC-chemokines including CCL3/MIP-1-alpha, CCL4/MIP-1-beta and RANTES and subsequently transduces a signal by increasing the intracellular calcium ion level. May play a role in the control of granulocytic lineage proliferation or differentiation. Participates in T-lymphocyte migration to the infection site by acting as a chemotactic receptor. This Mus musculus (Mouse) protein is C-C chemokine receptor type 5 (Ccr5).